The primary structure comprises 65 residues: MPKMKTKKSAAKRFRIRAGGSIKRSQAFKRHILTKKTTKNKRQLRGMTVVHASDVASVRAMLPYA.

Belongs to the bacterial ribosomal protein bL35 family.

This is Large ribosomal subunit protein bL35 from Nitrosomonas eutropha (strain DSM 101675 / C91 / Nm57).